The primary structure comprises 432 residues: Trigger factor (432 aa).

A PPIase FKBP-type domain is found at 161–246 (GKRVSIDFVG…VNKVEARQLP (86 aa)).

This sequence belongs to the FKBP-type PPIase family. Tig subfamily.

The protein localises to the cytoplasm. The enzyme catalyses [protein]-peptidylproline (omega=180) = [protein]-peptidylproline (omega=0). Its function is as follows. Involved in protein export. Acts as a chaperone by maintaining the newly synthesized protein in an open conformation. Functions as a peptidyl-prolyl cis-trans isomerase. The chain is Trigger factor from Vibrio vulnificus (strain CMCP6).